Reading from the N-terminus, the 727-residue chain is Elongation factor 2 (727 aa).

A tr-type G domain is found at 19 to 260 (DQIRNMGICA…MAIKHLPNPL (242 aa)). GTP contacts are provided by residues 28-35 (AHIDHGKT), 94-98 (DTPGH), and 148-151 (NKVD). The residue at position 603 (His-603) is a Diphthamide.

The protein belongs to the TRAFAC class translation factor GTPase superfamily. Classic translation factor GTPase family. EF-G/EF-2 subfamily.

It is found in the cytoplasm. Functionally, catalyzes the GTP-dependent ribosomal translocation step during translation elongation. During this step, the ribosome changes from the pre-translocational (PRE) to the post-translocational (POST) state as the newly formed A-site-bound peptidyl-tRNA and P-site-bound deacylated tRNA move to the P and E sites, respectively. Catalyzes the coordinated movement of the two tRNA molecules, the mRNA and conformational changes in the ribosome. In Methanococcus maripaludis (strain C7 / ATCC BAA-1331), this protein is Elongation factor 2.